A 1274-amino-acid chain; its full sequence is ABC multidrug transporter E (1274 aa).

N48 carries N-linked (GlcNAc...) asparagine glycosylation. In terms of domain architecture, ABC transmembrane type-1 1 spans 120–344; sequence FCFRVTGLRV…IASPLIIVSK (225 aa). Transmembrane regions (helical) follow at residues 183–203, 205–225, 280–300, and 321–341; these read LALL…LTLV, SSAL…MTKI, IFGI…SLAF, and VFFS…PLII. Positions 377 to 629 constitute an ABC transporter 1 domain; sequence IIFRDVRFTY…EGGVYRDLVN (253 aa). Residue 412-419 coordinates ATP; that stretch reads GPSGSGKS. N-linked (GlcNAc...) asparagine glycans are attached at residues N473 and N580. The next 2 membrane-spanning stretches (helical) occupy residues 697-717 and 737-757; these read VAVL…SWLF and FWAL…STVG. An ABC transmembrane type-1 2 domain is found at 697–984; sequence VAVLISTAGA…FFSFASNFAQ (288 aa). N-linked (GlcNAc...) asparagine glycosylation is present at N792. Helical transmembrane passes span 818-838, 840-860, and 924-944; these read FPLI…SFGW, LSLV…FMRI, and LIFA…FWYG. One can recognise an ABC transporter 2 domain in the interval 1023 to 1269; sequence VEFHDVSFRY…KGTYWQMVSS (247 aa). A glycan (N-linked (GlcNAc...) asparagine) is linked at N1044. 1057-1064 provides a ligand contact to ATP; it reads GPSGCGKT. Residue N1117 is glycosylated (N-linked (GlcNAc...) asparagine).

The protein belongs to the ABC transporter superfamily. ABCB family. Multidrug resistance exporter (TC 3.A.1.201) subfamily.

It localises to the cell membrane. Its function is as follows. Pleiotropic ABC efflux transporter that may be involved in A.fumigatus adaptation to azoles such as vorizonazole. This chain is ABC multidrug transporter E, found in Aspergillus fumigatus (strain ATCC MYA-4609 / CBS 101355 / FGSC A1100 / Af293) (Neosartorya fumigata).